The primary structure comprises 187 residues: Transcriptional repressor NrdR (187 aa).

Positions Met-1–Gly-21 are disordered. A zinc finger spans residues Cys-3–Cys-34. The ATP-cone domain maps to Ile-49–Asp-139. Composition is skewed to polar residues over residues Ile-152 to Ser-162 and Ser-170 to Arg-187. Positions Ile-152–Arg-187 are disordered.

Belongs to the NrdR family. It depends on Zn(2+) as a cofactor.

Negatively regulates transcription of bacterial ribonucleotide reductase nrd genes and operons by binding to NrdR-boxes. This chain is Transcriptional repressor NrdR, found in Crocosphaera subtropica (strain ATCC 51142 / BH68) (Cyanothece sp. (strain ATCC 51142)).